Here is a 207-residue protein sequence, read N- to C-terminus: MKVEVQSLDASKKGSIELNDAVFGIEPRADILHRVVTWQLEKRRAPTRATRERSDVARSGKKFGRQKGGGTARHGDRRSPIFIGGGKAHGARARVFNPSLNKKVRALGLRMALSSKAKTGTLVVIEALDVEAKTKLLAAQIQSLGFGPKVLVVDGDTVNENFARASSNLVGLDVLPAVGANVYDILKHDTLVLTRAAVEKLEARLNG.

The segment covering 44–58 (RAPTRATRERSDVAR) has biased composition (basic and acidic residues). The disordered stretch occupies residues 44–82 (RAPTRATRERSDVARSGKKFGRQKGGGTARHGDRRSPIF).

Belongs to the universal ribosomal protein uL4 family. Part of the 50S ribosomal subunit.

In terms of biological role, one of the primary rRNA binding proteins, this protein initially binds near the 5'-end of the 23S rRNA. It is important during the early stages of 50S assembly. It makes multiple contacts with different domains of the 23S rRNA in the assembled 50S subunit and ribosome. Its function is as follows. Forms part of the polypeptide exit tunnel. This Zymomonas mobilis subsp. mobilis (strain ATCC 31821 / ZM4 / CP4) protein is Large ribosomal subunit protein uL4.